The sequence spans 309 residues: Elongation factor Ts (309 aa).

The interval 98–101 is involved in Mg(2+) ion dislocation from EF-Tu; it reads TDFV.

It belongs to the EF-Ts family.

It is found in the cytoplasm. Functionally, associates with the EF-Tu.GDP complex and induces the exchange of GDP to GTP. It remains bound to the aminoacyl-tRNA.EF-Tu.GTP complex up to the GTP hydrolysis stage on the ribosome. This is Elongation factor Ts from Orientia tsutsugamushi (strain Boryong) (Rickettsia tsutsugamushi).